Here is a 306-residue protein sequence, read N- to C-terminus: Non-specific ribonucleoside hydrolase RihC (306 aa).

His-235 is a catalytic residue.

Belongs to the IUNH family. RihC subfamily.

Functionally, hydrolyzes both purine and pyrimidine ribonucleosides with a broad-substrate specificity. The sequence is that of Non-specific ribonucleoside hydrolase RihC from Salmonella agona (strain SL483).